A 337-amino-acid chain; its full sequence is Phosphoribosylformylglycinamidine cyclo-ligase (337 aa).

Belongs to the AIR synthase family.

It localises to the cytoplasm. The enzyme catalyses 2-formamido-N(1)-(5-O-phospho-beta-D-ribosyl)acetamidine + ATP = 5-amino-1-(5-phospho-beta-D-ribosyl)imidazole + ADP + phosphate + H(+). Its pathway is purine metabolism; IMP biosynthesis via de novo pathway; 5-amino-1-(5-phospho-D-ribosyl)imidazole from N(2)-formyl-N(1)-(5-phospho-D-ribosyl)glycinamide: step 2/2. In Gloeobacter violaceus (strain ATCC 29082 / PCC 7421), this protein is Phosphoribosylformylglycinamidine cyclo-ligase.